The chain runs to 229 residues: 3-dehydroquinate dehydratase (229 aa).

3-dehydroquinate-binding positions include 33-35 (EWR) and R65. The active-site Proton donor/acceptor is the H121. The Schiff-base intermediate with substrate role is filled by K146. 3-dehydroquinate is bound by residues R188, S207, and Q211.

It belongs to the type-I 3-dehydroquinase family. Homodimer.

It carries out the reaction 3-dehydroquinate = 3-dehydroshikimate + H2O. The protein operates within metabolic intermediate biosynthesis; chorismate biosynthesis; chorismate from D-erythrose 4-phosphate and phosphoenolpyruvate: step 3/7. Its function is as follows. Involved in the third step of the chorismate pathway, which leads to the biosynthesis of aromatic amino acids. Catalyzes the cis-dehydration of 3-dehydroquinate (DHQ) and introduces the first double bond of the aromatic ring to yield 3-dehydroshikimate. The polypeptide is 3-dehydroquinate dehydratase (Lactococcus lactis subsp. cremoris (strain MG1363)).